A 59-amino-acid chain; its full sequence is Protein translocase subunit SecE (59 aa).

The helical transmembrane segment at 30–50 (ITVISTVIFFVIFFALLDTGI) threads the bilayer.

The protein belongs to the SecE/SEC61-gamma family. As to quaternary structure, component of the Sec protein translocase complex. Heterotrimer consisting of SecY, SecE and SecG subunits. The heterotrimers can form oligomers, although 1 heterotrimer is thought to be able to translocate proteins. Interacts with the ribosome. Interacts with SecDF, and other proteins may be involved. Interacts with SecA.

It is found in the cell membrane. Functionally, essential subunit of the Sec protein translocation channel SecYEG. Clamps together the 2 halves of SecY. May contact the channel plug during translocation. In Bacillus subtilis (strain 168), this protein is Protein translocase subunit SecE.